The chain runs to 330 residues: Phenylalanine--tRNA ligase alpha subunit (330 aa).

Glu-246 is a Mg(2+) binding site.

Belongs to the class-II aminoacyl-tRNA synthetase family. Phe-tRNA synthetase alpha subunit type 1 subfamily. Tetramer of two alpha and two beta subunits. Mg(2+) is required as a cofactor.

The protein localises to the cytoplasm. The enzyme catalyses tRNA(Phe) + L-phenylalanine + ATP = L-phenylalanyl-tRNA(Phe) + AMP + diphosphate + H(+). This is Phenylalanine--tRNA ligase alpha subunit from Wolinella succinogenes (strain ATCC 29543 / DSM 1740 / CCUG 13145 / JCM 31913 / LMG 7466 / NCTC 11488 / FDC 602W) (Vibrio succinogenes).